A 142-amino-acid polypeptide reads, in one-letter code: uncharacterized protein (142 aa).

At 1–9 the chain is on the cytoplasmic side; that stretch reads MDMVSPVLN. A helical membrane pass occupies residues 10–30; the sequence is LQSSILGELVGIIGKVFFLLI. Over 31–41 the chain is Extracellular; that stretch reads EEIKYPIITPK. The chain crosses the membrane as a helical span at residues 42 to 62; the sequence is IIVDAQISSWSLFFFASICNL. Residues 63–101 are Cytoplasmic-facing; sequence SAKFREPIVTTSSIISLMESEKDLKNVNEYFQIMAKMLF. A helical transmembrane segment spans residues 102–122; sequence ILENKIVVSLFVVFNISVLII. Topologically, residues 123 to 142 are extracellular; the sequence is VKSEPYSYGKVLFKPSSSIF.

The protein resides in the membrane. This is an uncharacterized protein from Saccharomyces cerevisiae (strain ATCC 204508 / S288c) (Baker's yeast).